Here is a 1416-residue protein sequence, read N- to C-terminus: DNA-directed RNA polymerase subunit beta' (1416 aa).

Positions 60, 62, 75, and 78 each coordinate Zn(2+). Residues aspartate 449, aspartate 451, and aspartate 453 each contribute to the Mg(2+) site. The Zn(2+) site is built by cysteine 781, cysteine 855, cysteine 862, and cysteine 865.

Belongs to the RNA polymerase beta' chain family. As to quaternary structure, the RNAP catalytic core consists of 2 alpha, 1 beta, 1 beta' and 1 omega subunit. When a sigma factor is associated with the core the holoenzyme is formed, which can initiate transcription. The cofactor is Mg(2+). Zn(2+) serves as cofactor.

The enzyme catalyses RNA(n) + a ribonucleoside 5'-triphosphate = RNA(n+1) + diphosphate. Functionally, DNA-dependent RNA polymerase catalyzes the transcription of DNA into RNA using the four ribonucleoside triphosphates as substrates. This Treponema pallidum (strain Nichols) protein is DNA-directed RNA polymerase subunit beta'.